The chain runs to 621 residues: Glucose 1,6-bisphosphate synthase (621 aa).

2 residues coordinate alpha-D-glucose 1,6-bisphosphate: arginine 73 and serine 175. The Phosphoserine intermediate role is filled by serine 175. Residues serine 175, aspartate 332, aspartate 334, and aspartate 336 each coordinate Mg(2+). A Phosphoserine modification is found at serine 175. 5 residues coordinate alpha-D-glucose 1,6-bisphosphate: aspartate 336, arginine 337, glutamate 433, serine 435, and lysine 447.

This sequence belongs to the phosphohexose mutase family. As to expression, expressed at highest levels in the brain and testis, at intermediate levels in thymus, spleen, lung and skeletal muscle, and at lowest levels in kidney, liver and heart.

The protein resides in the cytoplasm. Its subcellular location is the cytosol. It catalyses the reaction (2R)-3-phospho-glyceroyl phosphate + alpha-D-glucose 1-phosphate = alpha-D-glucose 1,6-bisphosphate + (2R)-3-phosphoglycerate + H(+). The enzyme catalyses alpha-D-glucose 6-phosphate + (2R)-3-phospho-glyceroyl phosphate = alpha-D-glucose 1,6-bisphosphate + (2R)-3-phosphoglycerate + H(+). The catalysed reaction is (2R)-3-phospho-glyceroyl phosphate + alpha-D-ribose 1-phosphate = alpha-D-ribose 1,5-bisphosphate + (2R)-3-phosphoglycerate + H(+). It carries out the reaction 2-deoxy-alpha-D-ribose 1-phosphate + (2R)-3-phospho-glyceroyl phosphate = 2-deoxy-alpha-D-ribose 1,5-bisphosphate + (2R)-3-phosphoglycerate + H(+). It catalyses the reaction (2R)-3-phospho-glyceroyl phosphate + alpha-D-mannose 1-phosphate = alpha-D-mannose 1,6-bisphosphate + (2R)-3-phosphoglycerate + H(+). Its function is as follows. Glucose 1,6-bisphosphate synthase using 1,3-bisphosphoglycerate as a phosphate donor and a series of 1-phosphate sugars, including glucose 1-phosphate, mannose 1-phosphate, ribose 1-phosphate and deoxyribose 1-phosphate, as acceptors. In vitro, also exhibits very low phosphopentomutase and phosphoglucomutase activity which are most probably not physiologically relevant. The polypeptide is Glucose 1,6-bisphosphate synthase (Mus musculus (Mouse)).